We begin with the raw amino-acid sequence, 726 residues long: A-type inclusion protein A25 homolog (726 aa).

The segment at T342–I361 is disordered. The segment covering E347 to P360 has biased composition (basic and acidic residues). The segment at T426–N713 is 4 X approximate tandem repeats. 4 tandem repeats follow at residues R612–N634, Q639–S661, T667–N689, and T691–N713.

It belongs to the poxviridae A25 protein family. In terms of assembly, interacts (via N-terminus) with protein A26.

It localises to the virion. Its function is as follows. Structural protein that forms a matrix surrounding the mature virion (MV) through interaction with protein A26. Presence of protein A25 in the virion structurally prevents direct virus-cell fusion mechanism. This chain is A-type inclusion protein A25 homolog, found in Camelus.